The following is a 78-amino-acid chain: Sec-independent protein translocase protein TatA (78 aa).

A helical transmembrane segment spans residues 1-21 (MGGISIWQLLIIAVIVVLLFG). Basic and acidic residues predominate over residues 47 to 59 (ESEKKDADFEPKS). The segment at 47-78 (ESEKKDADFEPKSLEQQNKQAATESKKDKEQA) is disordered. Residues 60–69 (LEQQNKQAAT) show a composition bias toward polar residues.

The protein belongs to the TatA/E family. In terms of assembly, the Tat system comprises two distinct complexes: a TatABC complex, containing multiple copies of TatA, TatB and TatC subunits, and a separate TatA complex, containing only TatA subunits. Substrates initially bind to the TatABC complex, which probably triggers association of the separate TatA complex to form the active translocon.

The protein localises to the cell inner membrane. Functionally, part of the twin-arginine translocation (Tat) system that transports large folded proteins containing a characteristic twin-arginine motif in their signal peptide across membranes. TatA could form the protein-conducting channel of the Tat system. The sequence is that of Sec-independent protein translocase protein TatA from Vibrio vulnificus (strain YJ016).